A 173-amino-acid chain; its full sequence is Ribosome maturation factor RimM (173 aa).

The 73-residue stretch at Val94–Phe166 folds into the PRC barrel domain.

Belongs to the RimM family. In terms of assembly, binds ribosomal protein uS19.

The protein resides in the cytoplasm. Its function is as follows. An accessory protein needed during the final step in the assembly of 30S ribosomal subunit, possibly for assembly of the head region. Essential for efficient processing of 16S rRNA. May be needed both before and after RbfA during the maturation of 16S rRNA. It has affinity for free ribosomal 30S subunits but not for 70S ribosomes. The polypeptide is Ribosome maturation factor RimM (Amoebophilus asiaticus (strain 5a2)).